We begin with the raw amino-acid sequence, 412 residues long: uncharacterized protein (412 aa).

Helical transmembrane passes span 17–37 (LLLALALTMGVFAAGSEELVI), 54–74 (VLALSISIYGVMIFIGAPLLV), 91–111 (MIFIIGTVICALAQNIFFFFL), 112–132 (GRALSGLAAGAFVPTAYAVVG), 146–166 (LIVSSWSLALIFGVPLGSFIG), 173–193 (WTFWIFALMGVLVVLLILLEM), 225–245 (VYITITFCNMIGFYGMYSFLG), 257–277 (TAAGLFIMIYGIGFSMSVITG), 299–319 (LLACLPYAPASMFLLIASLFI), 346–366 (VMVFYSLASNLAVTLGSALMG), and 375–395 (AAVGLICAAITVLGFVLSVFA).

It belongs to the major facilitator superfamily.

The protein localises to the cell membrane. This is an uncharacterized protein from Bacillus subtilis (strain 168).